Consider the following 617-residue polypeptide: Putative type VI secretion system protein VgrGB (617 aa).

Residues 449 to 469 form a disordered region; that stretch reads RTFHATNPSPYPLPASKTRTS.

Belongs to the VgrG protein family.

In terms of biological role, a Vgr protein that is probably part of a type VI secretion system (T6SS). May be required for export of proteins involved in Rhs-mediated cellular contact-dependent growth inhibition (CDI). This Dickeya dadantii (strain 3937) (Erwinia chrysanthemi (strain 3937)) protein is Putative type VI secretion system protein VgrGB (vgrGB).